A 105-amino-acid chain; its full sequence is Thioredoxin (105 aa).

The Thioredoxin domain maps to 1-105 (MANNVTDSSF…SLLDWINKSI (105 aa)). Cys-30 and Cys-33 are disulfide-bonded.

This sequence belongs to the thioredoxin family.

Functionally, component of the thioredoxin-thioredoxin reductase system. Participates in various redox reactions through the reversible oxidation of its active center dithiol to a disulfide and catalyzes dithiol-disulfide exchange reactions. The protein is Thioredoxin (trxA) of Rickettsia felis (strain ATCC VR-1525 / URRWXCal2) (Rickettsia azadi).